Here is a 364-residue protein sequence, read N- to C-terminus: Ribosomal RNA large subunit methyltransferase F (364 aa).

Low complexity predominate over residues 1-17; it reads MPKPAIKTAAKPATSSA. The interval 1-53 is disordered; it reads MPKPAIKTAAKPATSSAGKRGKPITPKSVAKPQAAKPKTVSKPKVKPGEKKRL. The segment covering 39 to 53 has biased composition (basic residues); that stretch reads TVSKPKVKPGEKKRL.

Belongs to the methyltransferase superfamily. METTL16/RlmF family.

The protein resides in the cytoplasm. It catalyses the reaction adenosine(1618) in 23S rRNA + S-adenosyl-L-methionine = N(6)-methyladenosine(1618) in 23S rRNA + S-adenosyl-L-homocysteine + H(+). Specifically methylates the adenine in position 1618 of 23S rRNA. The chain is Ribosomal RNA large subunit methyltransferase F from Shewanella sp. (strain MR-4).